The chain runs to 357 residues: bZIP transcription factor 23 (357 aa).

Positions 166 to 185 (PPVPPAPTPTAAAVPPPPPP) are disordered. The region spanning 275-338 (VERRQRRMIK…KNEVLERMSR (64 aa)) is the bZIP domain. The basic motif stretch occupies residues 277–296 (RRQRRMIKNRESAARSRQRK). Positions 303 to 317 (LEAEVAKLKELNDEL) are leucine-zipper.

The protein belongs to the bZIP family. ABI5 subfamily. As to expression, highly expressed in leaves.

It is found in the nucleus. Functionally, transcriptional activator that mediates abscisic acid (ABA) signaling. Can regulate the expression of a wide spectrum of stress-related genes in response to abiotic stresses through an ABA-dependent regulation pathway. Confers ABA-dependent drought and salinity tolerance. Binds specifically to the ABA-responsive elements (ABRE) in the promoter of target genes to mediate stress-responsive ABA signaling. The polypeptide is bZIP transcription factor 23 (Oryza sativa subsp. japonica (Rice)).